The primary structure comprises 431 residues: Mannan endo-1,4-beta-mannosidase 7 (431 aa).

Positions 1–25 (MKLLALFPFLAIVIQLSCWELGTDA) are cleaved as a signal peptide. Substrate is bound by residues W87 and N202. Catalysis depends on E203, which acts as the Proton donor. Substrate is bound at residue Y280. E320 functions as the Nucleophile in the catalytic mechanism. Position 362 (W362) interacts with substrate.

It belongs to the glycosyl hydrolase 5 (cellulase A) family. Expressed in stems, flowers, siliques and seeds. Expressed in root vasculature, leaf hydathodes, anther filaments, stigma, sepal vasculature, at the base and apical parts of siliques, and replum. Expressed in the micropylar endosperm and radicle tip in early germinating seeds.

Its subcellular location is the secreted. The enzyme catalyses Random hydrolysis of (1-&gt;4)-beta-D-mannosidic linkages in mannans, galactomannans and glucomannans.. Required for both, loosening of the micropylar endosperm, and rupture of the seed coat in germinating seeds. May participate in the hydrolysis of the mannans in the cell wall of germinating seeds. The chain is Mannan endo-1,4-beta-mannosidase 7 (MAN7) from Arabidopsis thaliana (Mouse-ear cress).